We begin with the raw amino-acid sequence, 138 residues long: Superoxide dismutase [Mn] (138 aa).

Residues His-2, His-49, Asp-133, and His-137 each contribute to the Mn(2+) site.

It belongs to the iron/manganese superoxide dismutase family. It depends on Mn(2+) as a cofactor.

It catalyses the reaction 2 superoxide + 2 H(+) = H2O2 + O2. In terms of biological role, destroys superoxide anion radicals which are normally produced within the cells and which are toxic to biological systems. In Mycobacterium szulgai, this protein is Superoxide dismutase [Mn] (sodA).